The sequence spans 250 residues: Isoprenyl transferase (250 aa).

Residue Asp26 is part of the active site. Residue Asp26 coordinates Mg(2+). Substrate contacts are provided by residues 27-30 (GNGR), Trp31, Arg39, His43, and 71-73 (STE). Asn74 serves as the catalytic Proton acceptor. Residues Trp75, Arg77, Arg198, and 204-206 (RLS) each bind substrate. Glu217 contributes to the Mg(2+) binding site.

This sequence belongs to the UPP synthase family. As to quaternary structure, homodimer. Requires Mg(2+) as cofactor.

Its function is as follows. Catalyzes the condensation of isopentenyl diphosphate (IPP) with allylic pyrophosphates generating different type of terpenoids. The protein is Isoprenyl transferase of Streptococcus agalactiae serotype V (strain ATCC BAA-611 / 2603 V/R).